A 148-amino-acid polypeptide reads, in one-letter code: uncharacterized protein (148 aa).

The N-terminal stretch at 1–19 (MLSNAKLLLSLAMASTALG) is a signal peptide. N41 and N59 each carry an N-linked (GlcNAc...) asparagine glycan. The GPI-anchor amidated asparagine moiety is linked to residue N127. Positions 128–148 (AANARAIPGALGLAGAVMMLL) are cleaved as a propeptide — removed in mature form.

The protein belongs to the SED1 family. The GPI-anchor is attached to the protein in the endoplasmic reticulum and serves to target the protein to the cell surface. There, the glucosamine-inositol phospholipid moiety is cleaved off and the GPI-modified mannoprotein is covalently attached via its lipidless GPI glycan remnant to the 1,6-beta-glucan of the outer cell wall layer.

The protein resides in the secreted. It localises to the cell wall. It is found in the membrane. Cell wall protein that plays a role in adaptation and resistance to cell wall stress. This is an uncharacterized protein from Saccharomyces cerevisiae (strain ATCC 204508 / S288c) (Baker's yeast).